Consider the following 817-residue polypeptide: Trehalose-phosphatase (817 aa).

The glycosyltransferase stretch occupies residues 1 to 547; the sequence is MSVYGKIPST…LAATKTDQRI (547 aa).

It in the N-terminal section; belongs to the glycosyltransferase 20 family. This sequence in the C-terminal section; belongs to the trehalose phosphatase family. Component of the trehalose synthase complex that contains at least tps1, ntp1, and tpp1. Interacts with tps1. Interacts with ntp1. It depends on Mg(2+) as a cofactor.

It carries out the reaction alpha,alpha-trehalose 6-phosphate + H2O = alpha,alpha-trehalose + phosphate. It participates in carbohydrate biosynthesis. In terms of biological role, phosphatase catalytic subunit of the trehalose synthase complex that catalyzes the production of trehalose from glucose-6-phosphate and UDP-alpha-D-glucose in a two step process. The disaccharide trehalose serves as a storage carbohydrate that is mobilized during nutrient stress and spore germination. Together with ntp1, regulates the level of trehalose as a protectant for cell integrity during thermal, osmotic, and oxidative stress. The polypeptide is Trehalose-phosphatase (Schizosaccharomyces pombe (strain 972 / ATCC 24843) (Fission yeast)).